The sequence spans 91 residues: Large ribosomal subunit protein uL23c (91 aa).

Belongs to the universal ribosomal protein uL23 family. In terms of assembly, part of the 50S ribosomal subunit.

Its subcellular location is the plastid. It localises to the chloroplast. In terms of biological role, binds to 23S rRNA. The protein is Large ribosomal subunit protein uL23c (rpl23) of Anthoceros angustus (Hornwort).